The primary structure comprises 613 residues: MPDYRSKTSTQGRNMAGARALWRATGMKDEDFKKPIIAIANSFTQFVPGHVHLKDLGQLVAREIERAGGVAKEFNTIAVDDGIAMGHDGMLYSLPSREIIADAVEYMVNAHCADAIVCISNCDKITPGMLMAALRLNIPVIFVSGGPMEAGKTKLASHGLDLVDAMVIAADSSASDEKVAEYERSACPTCGSCSGMFTANSMNCLTEALGLALPGNGSTLATHADREQLFLTAGRTIVELCKRYYGENDESVLPRSIANFKAFENAMMLDIAMGGSTNTILHLLAAAQEGEVEFDLRDIDRLSRKVPQLCKVAPNIQKYHMEDVHRAGGIFSILGSLARGGLLHTDLPTVHSRSMEEAIAKWDITQTDDEAVHTFFKAGPAGIPTQTAFSQSTRWETLDDDRENGCIRSFEHAYSQEGGLAVLYGNIALDGCVVKTAGVDESIHVFEGNAKIFESQDSAVRGILADEVKAGDIVIIRYEGPKGGPGMQEMLYPTSYLKSKGLGKACALLTDGRFSGGTSGLSIGHASPEAAAGGAIGLVRDGDKVLIDIPNRSINLLVSDEELAERRVEQDKKGWKPAEVRPRKVTTALKAYALLATSADKGAVRNKAMLEGL.

Aspartate 81 is a binding site for Mg(2+). Cysteine 122 contributes to the [2Fe-2S] cluster binding site. Positions 123 and 124 each coordinate Mg(2+). Lysine 124 bears the N6-carboxylysine mark. Cysteine 193 serves as a coordination point for [2Fe-2S] cluster. Glutamate 489 contacts Mg(2+). Serine 515 (proton acceptor) is an active-site residue.

The protein belongs to the IlvD/Edd family. Homodimer. It depends on [2Fe-2S] cluster as a cofactor. Mg(2+) serves as cofactor.

It carries out the reaction (2R)-2,3-dihydroxy-3-methylbutanoate = 3-methyl-2-oxobutanoate + H2O. The enzyme catalyses (2R,3R)-2,3-dihydroxy-3-methylpentanoate = (S)-3-methyl-2-oxopentanoate + H2O. It participates in amino-acid biosynthesis; L-isoleucine biosynthesis; L-isoleucine from 2-oxobutanoate: step 3/4. It functions in the pathway amino-acid biosynthesis; L-valine biosynthesis; L-valine from pyruvate: step 3/4. Functionally, functions in the biosynthesis of branched-chain amino acids. Catalyzes the dehydration of (2R,3R)-2,3-dihydroxy-3-methylpentanoate (2,3-dihydroxy-3-methylvalerate) into 2-oxo-3-methylpentanoate (2-oxo-3-methylvalerate) and of (2R)-2,3-dihydroxy-3-methylbutanoate (2,3-dihydroxyisovalerate) into 2-oxo-3-methylbutanoate (2-oxoisovalerate), the penultimate precursor to L-isoleucine and L-valine, respectively. This Pseudomonas putida (strain GB-1) protein is Dihydroxy-acid dehydratase.